We begin with the raw amino-acid sequence, 352 residues long: Maleylacetate reductase (352 aa).

This sequence belongs to the iron-containing alcohol dehydrogenase family.

It catalyses the reaction 3-oxoadipate + NAD(+) = maleylacetate + NADH + H(+). It carries out the reaction 3-oxoadipate + NADP(+) = maleylacetate + NADPH + H(+). It functions in the pathway xenobiotic degradation; (2,4,5-trichlorophenoxy)acetate degradation. This is Maleylacetate reductase (tftE) from Burkholderia cepacia (Pseudomonas cepacia).